The following is a 991-amino-acid chain: Translation initiation factor IF-2 (991 aa).

Disordered stretches follow at residues 58-82 (EGKKITLTRRQTSEIRQADATGRSR) and 106-405 (QARA…PAPQ). Low complexity predominate over residues 106–164 (QARADAAASDAAPAEPAPAAAEPSASAPVTAPVNAPAADAPQAPATAAPDTAAPAAETP). Over residues 165–175 (SQPPAVEPQPA) the composition is skewed to pro residues. Low complexity-rich tracts occupy residues 190-206 (AKPAEAPAEPAAPAAVE), 221-258 (AVQAEIETAPAPAAESAQAARPEPVTPKAEPAPAASKP), and 267-276 (APVPVAAPAV). The segment covering 279–289 (AGREEARRAAE) has biased composition (basic and acidic residues). Residues 379-388 (RAGGKGGKGG) show a composition bias toward gly residues. Positions 395 to 405 (QAERRHEPAPQ) are enriched in basic and acidic residues. The 168-residue stretch at 492-659 (PRAPVVTVMG…NVLLQAEILE (168 aa)) folds into the tr-type G domain. The interval 501 to 508 (GHVDHGKT) is G1. 501 to 508 (GHVDHGKT) provides a ligand contact to GTP. Residues 526–530 (GITQH) form a G2 region. The tract at residues 547-550 (DTPG) is G3. GTP is bound by residues 547–551 (DTPGH) and 601–604 (NKID). The G4 stretch occupies residues 601-604 (NKID). The segment at 637-639 (SAK) is G5.

It belongs to the TRAFAC class translation factor GTPase superfamily. Classic translation factor GTPase family. IF-2 subfamily.

It localises to the cytoplasm. Functionally, one of the essential components for the initiation of protein synthesis. Protects formylmethionyl-tRNA from spontaneous hydrolysis and promotes its binding to the 30S ribosomal subunits. Also involved in the hydrolysis of GTP during the formation of the 70S ribosomal complex. The polypeptide is Translation initiation factor IF-2 (Bordetella petrii (strain ATCC BAA-461 / DSM 12804 / CCUG 43448)).